The sequence spans 395 residues: Putative 8-amino-7-oxononanoate synthase (395 aa).

Arginine 23 contacts substrate. Pyridoxal 5'-phosphate is bound at residue 110–111; the sequence is GY. Histidine 135 serves as a coordination point for substrate. Residues serine 182, 207–210, and 239–242 contribute to the pyridoxal 5'-phosphate site; these read DEAH and TFSK. Residue lysine 242 is modified to N6-(pyridoxal phosphate)lysine. Threonine 356 serves as a coordination point for substrate.

This sequence belongs to the class-II pyridoxal-phosphate-dependent aminotransferase family. BioF subfamily. Homodimer. Pyridoxal 5'-phosphate serves as cofactor.

The catalysed reaction is 6-carboxyhexanoyl-[ACP] + L-alanine + H(+) = (8S)-8-amino-7-oxononanoate + holo-[ACP] + CO2. It participates in cofactor biosynthesis; biotin biosynthesis. Catalyzes the decarboxylative condensation of pimeloyl-[acyl-carrier protein] and L-alanine to produce 8-amino-7-oxononanoate (AON), [acyl-carrier protein], and carbon dioxide. This is Putative 8-amino-7-oxononanoate synthase (bioF) from Bacillus mycoides (strain KBAB4) (Bacillus weihenstephanensis).